An 885-amino-acid chain; its full sequence is Alanine--tRNA ligase (885 aa).

Basic and acidic residues predominate over residues 426-444; the sequence is QEQKTRARQDRREKQRGGA. The interval 426–445 is disordered; the sequence is QEQKTRARQDRREKQRGGAE. Zn(2+)-binding residues include His-568, His-572, Cys-671, and His-675.

Belongs to the class-II aminoacyl-tRNA synthetase family. It depends on Zn(2+) as a cofactor.

The protein resides in the cytoplasm. It carries out the reaction tRNA(Ala) + L-alanine + ATP = L-alanyl-tRNA(Ala) + AMP + diphosphate. Functionally, catalyzes the attachment of alanine to tRNA(Ala) in a two-step reaction: alanine is first activated by ATP to form Ala-AMP and then transferred to the acceptor end of tRNA(Ala). Also edits incorrectly charged Ser-tRNA(Ala) and Gly-tRNA(Ala) via its editing domain. In Chlorobium phaeovibrioides (strain DSM 265 / 1930) (Prosthecochloris vibrioformis (strain DSM 265)), this protein is Alanine--tRNA ligase.